The sequence spans 318 residues: Deoxyhypusine hydroxylase (318 aa).

HEAT-like PBS-type repeat units lie at residues 70–96 (LKHE…VLEN) and 103–129 (VRHE…YFKE). The Fe cation site is built by His-72, Glu-73, His-105, Glu-106, His-231, Glu-232, His-264, and Glu-265. The HEAT-like PBS-type 3 repeat unit spans residues 262 to 288 (VRHEAAEALGSIATDECLPVLQSFLND).

Belongs to the deoxyhypusine hydroxylase family. Requires Fe(2+) as cofactor.

Its subcellular location is the cytoplasm. It is found in the nucleus. The catalysed reaction is [eIF5A protein]-deoxyhypusine + AH2 + O2 = [eIF5A protein]-hypusine + A + H2O. The protein operates within protein modification; eIF5A hypusination. Functionally, catalyzes the hydroxylation of the N(6)-(4-aminobutyl)-L-lysine intermediate to form hypusine, an essential post-translational modification only found in mature eIF-5A factor. The polypeptide is Deoxyhypusine hydroxylase (Candida albicans (strain SC5314 / ATCC MYA-2876) (Yeast)).